A 217-amino-acid polypeptide reads, in one-letter code: MLO-like protein (217 aa).

3 consecutive transmembrane segments (helical) span residues 35–55 (FKVVVGISPILWFFAVLFLLS), 59–79 (GWVAYLWLPFIPLIIILVVGT), and 119–139 (LVLFLIHFCLFQNAFQLAFFI).

This sequence belongs to the MLO family.

The protein resides in the membrane. Functionally, may be involved in modulation of pathogen defense and leaf cell death. This is MLO-like protein from Linum usitatissimum (Flax).